The chain runs to 715 residues: Fatty acid oxidation complex subunit alpha (715 aa).

Positions 1–190 (MTTTSAFMLS…KAGLVDDVVP (190 aa)) are enoyl-CoA hydratase. Residues 306–714 (GPLNSVGILG…FWTNGETDQG (409 aa)) form a 3-hydroxyacyl-CoA dehydrogenase region.

The protein in the N-terminal section; belongs to the enoyl-CoA hydratase/isomerase family. In the central section; belongs to the 3-hydroxyacyl-CoA dehydrogenase family. Heterotetramer of two alpha chains (FadJ) and two beta chains (FadI).

Its subcellular location is the cytoplasm. The catalysed reaction is a (3S)-3-hydroxyacyl-CoA = a (2E)-enoyl-CoA + H2O. The enzyme catalyses a 4-saturated-(3S)-3-hydroxyacyl-CoA = a (3E)-enoyl-CoA + H2O. It carries out the reaction a (3S)-3-hydroxyacyl-CoA + NAD(+) = a 3-oxoacyl-CoA + NADH + H(+). It catalyses the reaction (3S)-3-hydroxybutanoyl-CoA = (3R)-3-hydroxybutanoyl-CoA. It functions in the pathway lipid metabolism; fatty acid beta-oxidation. Catalyzes the formation of a hydroxyacyl-CoA by addition of water on enoyl-CoA. Also exhibits 3-hydroxyacyl-CoA epimerase and 3-hydroxyacyl-CoA dehydrogenase activities. The protein is Fatty acid oxidation complex subunit alpha of Salmonella typhi.